The sequence spans 284 residues: Formamidopyrimidine-DNA glycosylase (284 aa).

Pro-2 acts as the Schiff-base intermediate with DNA in catalysis. Catalysis depends on Glu-3, which acts as the Proton donor. The Proton donor; for beta-elimination activity role is filled by Lys-59. DNA-binding residues include His-94 and Arg-113. The FPG-type zinc finger occupies 239–273 (KVHTKKDQPCSVCNQLIVKKKINGRGSYFCLNCQK). Arg-263 acts as the Proton donor; for delta-elimination activity in catalysis.

This sequence belongs to the FPG family. As to quaternary structure, monomer. The cofactor is Zn(2+).

The catalysed reaction is Hydrolysis of DNA containing ring-opened 7-methylguanine residues, releasing 2,6-diamino-4-hydroxy-5-(N-methyl)formamidopyrimidine.. It catalyses the reaction 2'-deoxyribonucleotide-(2'-deoxyribose 5'-phosphate)-2'-deoxyribonucleotide-DNA = a 3'-end 2'-deoxyribonucleotide-(2,3-dehydro-2,3-deoxyribose 5'-phosphate)-DNA + a 5'-end 5'-phospho-2'-deoxyribonucleoside-DNA + H(+). In terms of biological role, involved in base excision repair of DNA damaged by oxidation or by mutagenic agents. Acts as a DNA glycosylase that recognizes and removes damaged bases. Has a preference for oxidized purines, such as 7,8-dihydro-8-oxoguanine (8-oxoG). Has AP (apurinic/apyrimidinic) lyase activity and introduces nicks in the DNA strand. Cleaves the DNA backbone by beta-delta elimination to generate a single-strand break at the site of the removed base with both 3'- and 5'-phosphates. The polypeptide is Formamidopyrimidine-DNA glycosylase (mutM) (Mycoplasma genitalium (strain ATCC 33530 / DSM 19775 / NCTC 10195 / G37) (Mycoplasmoides genitalium)).